The sequence spans 522 residues: Protein nucleotidyltransferase YdiU (522 aa).

Gly101, Gly103, Arg104, Lys123, Asp135, Gly136, Arg193, and Arg200 together coordinate ATP. The active-site Proton acceptor is Asp270. Mg(2+) is bound by residues Asn271 and Asp280. Asp280 contacts ATP.

This sequence belongs to the SELO family. The cofactor is Mg(2+). Mn(2+) is required as a cofactor.

It catalyses the reaction L-seryl-[protein] + ATP = 3-O-(5'-adenylyl)-L-seryl-[protein] + diphosphate. It carries out the reaction L-threonyl-[protein] + ATP = 3-O-(5'-adenylyl)-L-threonyl-[protein] + diphosphate. The enzyme catalyses L-tyrosyl-[protein] + ATP = O-(5'-adenylyl)-L-tyrosyl-[protein] + diphosphate. The catalysed reaction is L-histidyl-[protein] + UTP = N(tele)-(5'-uridylyl)-L-histidyl-[protein] + diphosphate. It catalyses the reaction L-seryl-[protein] + UTP = O-(5'-uridylyl)-L-seryl-[protein] + diphosphate. It carries out the reaction L-tyrosyl-[protein] + UTP = O-(5'-uridylyl)-L-tyrosyl-[protein] + diphosphate. In terms of biological role, nucleotidyltransferase involved in the post-translational modification of proteins. It can catalyze the addition of adenosine monophosphate (AMP) or uridine monophosphate (UMP) to a protein, resulting in modifications known as AMPylation and UMPylation. The chain is Protein nucleotidyltransferase YdiU from Flavobacterium johnsoniae (strain ATCC 17061 / DSM 2064 / JCM 8514 / BCRC 14874 / CCUG 350202 / NBRC 14942 / NCIMB 11054 / UW101) (Cytophaga johnsonae).